The sequence spans 466 residues: Asparagine--tRNA ligase (466 aa).

Belongs to the class-II aminoacyl-tRNA synthetase family. Homodimer.

Its subcellular location is the cytoplasm. The enzyme catalyses tRNA(Asn) + L-asparagine + ATP = L-asparaginyl-tRNA(Asn) + AMP + diphosphate + H(+). The protein is Asparagine--tRNA ligase of Salmonella typhimurium (strain LT2 / SGSC1412 / ATCC 700720).